The following is a 1207-amino-acid chain: DNA-directed RNA polymerase subunit beta' (1207 aa).

Residues Cys60, Cys62, Cys75, and Cys78 each coordinate Zn(2+). Mg(2+) contacts are provided by Asp450, Asp452, and Asp454. 4 residues coordinate Zn(2+): Cys818, Cys892, Cys899, and Cys902.

It belongs to the RNA polymerase beta' chain family. The RNAP catalytic core consists of 2 alpha, 1 beta, 1 beta' and 1 omega subunit. When a sigma factor is associated with the core the holoenzyme is formed, which can initiate transcription. Mg(2+) serves as cofactor. The cofactor is Zn(2+).

It carries out the reaction RNA(n) + a ribonucleoside 5'-triphosphate = RNA(n+1) + diphosphate. In terms of biological role, DNA-dependent RNA polymerase catalyzes the transcription of DNA into RNA using the four ribonucleoside triphosphates as substrates. The chain is DNA-directed RNA polymerase subunit beta' from Lactococcus lactis subsp. lactis (strain IL1403) (Streptococcus lactis).